A 213-amino-acid chain; its full sequence is Adenylate kinase (213 aa).

10–15 is an ATP binding site; that stretch reads GAGKGT. Positions 30–59 are NMP; that stretch reads STGDMFRAAMANQTEMGLLAKSYIDKGDLV. AMP is bound by residues Thr-31, Arg-36, 57–59, 86–89, and Gln-93; these read DLV and GYPR. Residues 127–160 form an LID region; the sequence is GRIIHKKTGETFHKIFNPPAGDYDENDYYQREDD. ATP contacts are provided by residues Arg-128 and 137–138; that span reads TF. AMP-binding residues include Arg-157 and Arg-168. Gln-196 is a binding site for ATP.

Belongs to the adenylate kinase family. Monomer.

The protein resides in the cytoplasm. It carries out the reaction AMP + ATP = 2 ADP. The protein operates within purine metabolism; AMP biosynthesis via salvage pathway; AMP from ADP: step 1/1. Its function is as follows. Catalyzes the reversible transfer of the terminal phosphate group between ATP and AMP. Plays an important role in cellular energy homeostasis and in adenine nucleotide metabolism. The protein is Adenylate kinase of Streptococcus uberis (strain ATCC BAA-854 / 0140J).